Consider the following 74-residue polypeptide: Cytochrome b559 subunit alpha (74 aa).

Residues 22–36 (VIHTVTIPSLFVAGW) form a helical membrane-spanning segment. Histidine 24 is a heme binding site.

Belongs to the PsbE/PsbF family. As to quaternary structure, heterodimer of an alpha subunit and a beta subunit. PSII is composed of 1 copy each of membrane proteins PsbA, PsbB, PsbC, PsbD, PsbE, PsbF, PsbH, PsbI, PsbJ, PsbK, PsbL, PsbM, PsbT, PsbX, PsbY, PsbZ, Psb30/Ycf12, at least 3 peripheral proteins of the oxygen-evolving complex and a large number of cofactors. It forms dimeric complexes. The cofactor is heme b.

It is found in the plastid. It localises to the cyanelle thylakoid membrane. Functionally, this b-type cytochrome is tightly associated with the reaction center of photosystem II (PSII). PSII is a light-driven water:plastoquinone oxidoreductase that uses light energy to abstract electrons from H(2)O, generating O(2) and a proton gradient subsequently used for ATP formation. It consists of a core antenna complex that captures photons, and an electron transfer chain that converts photonic excitation into a charge separation. The sequence is that of Cytochrome b559 subunit alpha from Cyanophora paradoxa.